A 407-amino-acid polypeptide reads, in one-letter code: uncharacterized protein (407 aa).

2 disordered regions span residues 73–93 (SPHS…VHGG) and 116–202 (SGSI…IKPS). A run of 5 repeats spans residues 112–116 (GSIRS), 117–121 (GSIRS), 122–126 (GSIRN), 127–131 (GSIRS), and 132–136 (GSVRD). Residues 112–136 (GSIRSGSIRSGSIRNGSIRSGSVRD) form a 5 X 5 AA tandem repeats of G-[S]-[IV]-R-[DNS] region. The span at 116–132 (SGSIRSGSIRNGSIRSG) shows a compositional bias: low complexity. The segment covering 187 to 202 (NHYAESEYSEKSIKPS) has biased composition (basic and acidic residues).

This sequence belongs to the asfivirus B407L family.

This is an uncharacterized protein from Ornithodoros (relapsing fever ticks).